We begin with the raw amino-acid sequence, 266 residues long: Glutamate racemase (266 aa).

Substrate is bound by residues 9–10 and 41–42; these read DS and YG. Residue C72 is the Proton donor/acceptor of the active site. 73-74 serves as a coordination point for substrate; it reads NT. C183 serves as the catalytic Proton donor/acceptor. Residue 184 to 185 coordinates substrate; that stretch reads TH.

It belongs to the aspartate/glutamate racemases family.

It carries out the reaction L-glutamate = D-glutamate. It participates in cell wall biogenesis; peptidoglycan biosynthesis. Functionally, provides the (R)-glutamate required for cell wall biosynthesis. This Listeria monocytogenes serotype 4a (strain HCC23) protein is Glutamate racemase.